Consider the following 139-residue polypeptide: Putative pre-16S rRNA nuclease (139 aa).

Belongs to the YqgF nuclease family.

It is found in the cytoplasm. Could be a nuclease involved in processing of the 5'-end of pre-16S rRNA. This Streptococcus suis (strain 98HAH33) protein is Putative pre-16S rRNA nuclease.